A 450-amino-acid chain; its full sequence is Keratin, type I cytoskeletal 25 (450 aa).

The disordered stretch occupies residues Met-1 to Ser-25. The interval Met-1–Asn-78 is head. The coil 1A stretch occupies residues Glu-79 to Trp-114. Positions Glu-79–Cys-394 constitute an IF rod domain. Residues Tyr-115 to Ile-136 form a linker 1 region. A coil 1B region spans residues Ile-137–Leu-228. The segment at Gln-229–Leu-251 is linker 12. The coil 2 stretch occupies residues Leu-252–Asp-390. The tract at residues Asp-391 to Asn-450 is tail. Position 442 is a phosphoserine (Ser-442).

Belongs to the intermediate filament family. As to quaternary structure, heterodimer of a type I and a type II keratin. Heterodimer with type II keratin KRT5 leading to the formation of keratin intermediate filament (KIF) network. Interacts with KRT6A to form filaments.

Its subcellular location is the cytoplasm. Functionally, essential for the proper assembly of type I and type II keratin protein complexes and formation of keratin intermediate filaments in the inner root sheath (irs). Plays a role in the cytoskeleton organization. The chain is Keratin, type I cytoskeletal 25 from Bos taurus (Bovine).